A 103-amino-acid chain; its full sequence is Small ribosomal subunit protein uS10 (103 aa).

This sequence belongs to the universal ribosomal protein uS10 family. In terms of assembly, part of the 30S ribosomal subunit.

Involved in the binding of tRNA to the ribosomes. In Shewanella pealeana (strain ATCC 700345 / ANG-SQ1), this protein is Small ribosomal subunit protein uS10.